Consider the following 240-residue polypeptide: Phosducin-like protein 2 (240 aa).

One can recognise a Phosducin domain in the interval 54–214 (QRDKKIDDMS…MLGQAGAVPT (161 aa)). Ser-63 and Ser-73 each carry phosphoserine. The thioredoxin fold stretch occupies residues 99 to 240 (FGSVREISGQ…DLEDKSSDFY (142 aa)).

The protein belongs to the phosducin family.

The protein localises to the cytoplasm. Modulates the activation of caspases during apoptosis. The polypeptide is Phosducin-like protein 2 (Drosophila melanogaster (Fruit fly)).